A 158-amino-acid chain; its full sequence is uncharacterized protein (158 aa).

Transmembrane regions (helical) follow at residues 66 to 86 and 94 to 114; these read LLII…PWIM and FFSL…SLTI.

The protein localises to the membrane. This is an uncharacterized protein from Saccharomyces cerevisiae (strain ATCC 204508 / S288c) (Baker's yeast).